The chain runs to 536 residues: Lysosomal acid glucosylceramidase (536 aa).

Positions 1–39 (MELSSPSREEYPMPRGRVGIMAASLMGLLLLHTVSWVSG) are cleaved as a signal peptide. Disulfide bonds link C43/C55 and C57/C62. N-linked (GlcNAc...) asparagine glycosylation is found at N58, N98, N185, and N208. E274 acts as the Proton donor in catalysis. N-linked (GlcNAc...) asparagine glycosylation is present at N309. E379 acts as the Nucleophile in catalysis. The N-linked (GlcNAc...) asparagine glycan is linked to N501.

This sequence belongs to the glycosyl hydrolase 30 family. In terms of assembly, interacts with saposin-C. Interacts with SCARB2. Interacts with TCP1. Interacts with GRN; this interaction prevents aggregation of GBA1-SCARB2 complex via interaction with HSPA1A upon stress.

It localises to the lysosome membrane. The enzyme catalyses a beta-D-glucosyl-(1&lt;-&gt;1')-N-acylsphing-4-enine + H2O = an N-acylsphing-4-enine + D-glucose. The catalysed reaction is a beta-D-galactosyl-(1&lt;-&gt;1')-N-acylsphing-4-enine + H2O = an N-acylsphing-4-enine + D-galactose. It carries out the reaction cholesteryl 3-beta-D-glucoside + H2O = cholesterol + D-glucose. It catalyses the reaction a beta-D-glucosyl-(1&lt;-&gt;1')-N-acylsphing-4-enine + cholesterol = cholesteryl 3-beta-D-glucoside + an N-acylsphing-4-enine. The enzyme catalyses beta-D-glucosyl-N-(9Z-octadecenoyl)-sphing-4E-enine + cholesterol = N-(9Z-octadecenoyl)-sphing-4-enine + cholesteryl 3-beta-D-glucoside. The catalysed reaction is beta-D-glucosyl-N-octanoylsphing-4E-enine + cholesterol = N-octanoylsphing-4-enine + cholesteryl 3-beta-D-glucoside. It carries out the reaction beta-D-glucosyl-N-dodecanoylsphing-4-enine + cholesterol = N-dodecanoylsphing-4-enine + cholesteryl 3-beta-D-glucoside. It catalyses the reaction beta-D-glucosyl-(1&lt;-&gt;1)-N-octadecanoylsphing-4-enine + cholesterol = N-octadecanoylsphing-4-enine + cholesteryl 3-beta-D-glucoside. The enzyme catalyses beta-D-glucosyl-(1&lt;-&gt;1')-N-(15Z-tetracosenoyl)-sphing-4-enine + cholesterol = N-(15Z-tetracosenoyl)-sphing-4-enine + cholesteryl 3-beta-D-glucoside. The catalysed reaction is a beta-D-galactosyl-(1&lt;-&gt;1')-N-acylsphing-4-enine + cholesterol = cholesteryl 3-beta-D-galactoside + an N-acylsphing-4-enine. It carries out the reaction 1-(beta-D-galactosyl)-N-dodecanoylsphing-4-enine + cholesterol = cholesteryl 3-beta-D-galactoside + N-dodecanoylsphing-4-enine. It catalyses the reaction a beta-D-xylosyl-(1&lt;-&gt;1')-N-acylsphing-4-enine + cholesterol = cholesteryl 3-beta-D-xyloside + an N-acylsphing-4-enine. The enzyme catalyses beta-D-xylosyl-(1&lt;-&gt;1')-N-(9Z-octadecenoyl)-sphing-4-enine + cholesterol = cholesteryl 3-beta-D-xyloside + N-(9Z-octadecenoyl)-sphing-4-enine. Its pathway is steroid metabolism; cholesterol metabolism. It participates in sphingolipid metabolism. In terms of biological role, glucosylceramidase that catalyzes, within the lysosomal compartment, the hydrolysis of glucosylceramides/GlcCers (such as beta-D-glucosyl-(1&lt;-&gt;1')-N-acylsphing-4-enine) into free ceramides (such as N-acylsphing-4-enine) and glucose. Plays a central role in the degradation of complex lipids and the turnover of cellular membranes. Through the production of ceramides, participates in the PKC-activated salvage pathway of ceramide formation. Catalyzes the glucosylation of cholesterol, through a transglucosylation reaction where glucose is transferred from GlcCer to cholesterol. GlcCer containing mono-unsaturated fatty acids (such as beta-D-glucosyl-N-(9Z-octadecenoyl)-sphing-4-enine) are preferred as glucose donors for cholesterol glucosylation when compared with GlcCer containing same chain length of saturated fatty acids (such as beta-D-glucosyl-N-octadecanoyl-sphing-4-enine). Under specific conditions, may alternatively catalyze the reverse reaction, transferring glucose from cholesteryl 3-beta-D-glucoside to ceramide. Can also hydrolyze cholesteryl 3-beta-D-glucoside producing glucose and cholesterol. Catalyzes the hydrolysis of galactosylceramides/GalCers (such as beta-D-galactosyl-(1&lt;-&gt;1')-N-acylsphing-4-enine), as well as the transfer of galactose between GalCers and cholesterol in vitro, but with lower activity than with GlcCers. Contrary to GlcCer and GalCer, xylosylceramide/XylCer (such as beta-D-xyosyl-(1&lt;-&gt;1')-N-acylsphing-4-enine) is not a good substrate for hydrolysis, however it is a good xylose donor for transxylosylation activity to form cholesteryl 3-beta-D-xyloside. This Bos taurus (Bovine) protein is Lysosomal acid glucosylceramidase (GBA1).